The sequence spans 422 residues: Phytoene synthase, chloroplastic (422 aa).

A chloroplast-targeting transit peptide spans 1-83 (MSLASSLVVS…GSVIVASMVA (83 aa)).

The protein belongs to the phytoene/squalene synthase family. Monomer.

The protein localises to the plastid. It localises to the chloroplast. It carries out the reaction 2 (2E,6E,10E)-geranylgeranyl diphosphate = 15-cis-phytoene + 2 diphosphate. It functions in the pathway carotenoid biosynthesis; phytoene biosynthesis; all-trans-phytoene from geranylgeranyl diphosphate: step 1/1. Its function is as follows. Catalyzes the reaction from prephytoene diphosphate to phytoene. This chain is Phytoene synthase, chloroplastic (PSY), found in Cucumis melo (Muskmelon).